Reading from the N-terminus, the 274-residue chain is Penicillin-insensitive murein endopeptidase (274 aa).

The first 19 residues, 1-19 (MKNTVIALLALLASAGSLA), serve as a signal peptide directing secretion. 3 cysteine pairs are disulfide-bonded: C44-C265, C187-C235, and C216-C223. Residues H110, H113, D120, D147, H150, and H211 each contribute to the Zn(2+) site. Positions 224–263 (EDQAPPPPGDGCGAELQSWFEPPKPGSTPPVKKTPPPLPP) are disordered. Pro residues predominate over residues 245 to 263 (PPKPGSTPPVKKTPPPLPP).

It belongs to the peptidase M74 family. Dimer. Zn(2+) serves as cofactor.

The protein resides in the periplasm. Murein endopeptidase that cleaves the D-alanyl-meso-2,6-diamino-pimelyl amide bond that connects peptidoglycan strands. Likely plays a role in the removal of murein from the sacculus. In Klebsiella pneumoniae (strain 342), this protein is Penicillin-insensitive murein endopeptidase.